Reading from the N-terminus, the 398-residue chain is Protein CDKN2AIP homolog A (398 aa).

Positions Leu19–Ser124 constitute an XRN2-binding (XTBD) domain. Positions Lys118 to Arg245 are disordered. The span at Glu131–Ser147 shows a compositional bias: basic and acidic residues. Polar residues-rich tracts occupy residues Ser154–Leu163, Arg189–Ser199, and Gln226–Asn238.

It belongs to the CARF family.

The protein resides in the nucleus. It is found in the nucleoplasm. Functionally, may regulate DNA damage response and cell proliferation. This chain is Protein CDKN2AIP homolog A (cdkn2aip-a), found in Xenopus laevis (African clawed frog).